We begin with the raw amino-acid sequence, 315 residues long: Isoaspartyl peptidase/L-asparaginase 1 (315 aa).

Ser169 is modified (phosphoserine). Catalysis depends on Thr183, which acts as the Nucleophile. Substrate is bound by residues 211-214 (RIGD) and 233-236 (TGKG).

It belongs to the Ntn-hydrolase family. In terms of assembly, heterotetramer of two alpha and two beta chains arranged as a dimer of alpha/beta heterodimers. Cleaved into an alpha and beta chain by autocatalysis; this activates the enzyme. The N-terminal residue of the beta subunit is responsible for the nucleophile hydrolase activity.

It carries out the reaction Cleavage of a beta-linked Asp residue from the N-terminus of a polypeptide.. Its function is as follows. Acts in asparagine catabolism but also in the final steps of protein and degradation via hydrolysis of a range of isoaspartyl dipeptides. The affinity for Asn and at least 4 isoaspartyl dipeptides (L-beta-Asp-Ala, L-beta-Asp-Gly, L-beta-Asp-Leu, L-beta-Asp-Phe) is quite low, KM being greater than 4.0 mM. The enzyme is inactive on alpha-aspartyl dipeptides. The protein is Isoaspartyl peptidase/L-asparaginase 1 of Arabidopsis thaliana (Mouse-ear cress).